An 81-amino-acid chain; its full sequence is ATP synthase subunit c (81 aa).

2 consecutive transmembrane segments (helical) span residues 7–27 and 57–77; these read AASV…PGIG and LAFM…LLFA.

It belongs to the ATPase C chain family. In terms of assembly, F-type ATPases have 2 components, F(1) - the catalytic core - and F(0) - the membrane proton channel. F(1) has five subunits: alpha(3), beta(3), gamma(1), delta(1), epsilon(1). F(0) has four main subunits: a(1), b(1), b'(1) and c(10-14). The alpha and beta chains form an alternating ring which encloses part of the gamma chain. F(1) is attached to F(0) by a central stalk formed by the gamma and epsilon chains, while a peripheral stalk is formed by the delta, b and b' chains.

It localises to the cellular thylakoid membrane. F(1)F(0) ATP synthase produces ATP from ADP in the presence of a proton or sodium gradient. F-type ATPases consist of two structural domains, F(1) containing the extramembraneous catalytic core and F(0) containing the membrane proton channel, linked together by a central stalk and a peripheral stalk. During catalysis, ATP synthesis in the catalytic domain of F(1) is coupled via a rotary mechanism of the central stalk subunits to proton translocation. In terms of biological role, key component of the F(0) channel; it plays a direct role in translocation across the membrane. A homomeric c-ring of between 10-14 subunits forms the central stalk rotor element with the F(1) delta and epsilon subunits. In Nostoc sp. (strain PCC 7120 / SAG 25.82 / UTEX 2576), this protein is ATP synthase subunit c.